We begin with the raw amino-acid sequence, 464 residues long: tRNA(Ile2) 2-agmatinylcytidine synthetase TiaS (464 aa).

The protein belongs to the TiaS family.

Its subcellular location is the cytoplasm. It catalyses the reaction cytidine(34) in tRNA(Ile2) + agmatine + ATP + H2O = 2-agmatinylcytidine(34) in tRNA(Ile2) + AMP + 2 phosphate + 2 H(+). Functionally, ATP-dependent agmatine transferase that catalyzes the formation of 2-agmatinylcytidine (agm2C) at the wobble position (C34) of tRNA(Ile2), converting the codon specificity from AUG to AUA. The chain is tRNA(Ile2) 2-agmatinylcytidine synthetase TiaS from Ignisphaera aggregans (strain DSM 17230 / JCM 13409 / AQ1.S1).